A 231-amino-acid polypeptide reads, in one-letter code: NKG2-C type II integral membrane protein (231 aa).

The segment covering 1–12 (MNKQRGTFSEVS) has biased composition (polar residues). Positions 1–31 (MNKQRGTFSEVSLAQDPKRQQRKPKDNKSSI) are disordered. Residues 1 to 70 (MNKQRGTFSE…CQGLLPPPEK (70 aa)) are Cytoplasmic-facing. A compositionally biased stretch (basic and acidic residues) spans 16–28 (DPKRQQRKPKDNK). The chain crosses the membrane as a helical; Signal-anchor for type II membrane protein span at residues 71 to 93 (LTAEVLGIICIVLMATVLKTVVL). Topologically, residues 94-231 (IPFLEQNNSF…SKRYYCKHKL (138 aa)) are extracellular. N-linked (GlcNAc...) asparagine glycosylation is present at Asn100. Residues 116 to 229 (HCPEEWITYS…GSSKRYYCKH (114 aa)) form the C-type lectin domain. 3 disulfides stabilise this stretch: Cys117–Cys128, Cys145–Cys227, and Cys206–Cys219. An N-linked (GlcNAc...) asparagine glycan is attached at Asn149.

In terms of assembly, heterodimer with KLRD1; disulfide-linked. KLRD1-KLRC2 receptor complex interacts with TYROBP/DAP12 homodimer; this interaction is necessary for the expression on the cell surface. As to expression, natural killer cells.

The protein resides in the cell membrane. Its function is as follows. Immune activating receptor involved in self-nonself discrimination. In complex with KLRD1 on cytotoxic lymphocyte subsets, recognizes non-classical major histocompatibility MHC-E loaded with signal sequence-derived peptides from non-classical MHC-G molecules, likely playing a role in the generation and effector functions of adaptive natural killer (NK) cells and in maternal-fetal tolerance during pregnancy. Regulates the effector functions of terminally differentiated cytotoxic lymphocyte subsets, and in particular may play a role in adaptive NK cell response to viral infection. Upon MHC-E-peptide binding, transmits intracellular signals via the adapter protein TYROBP/DAP12, triggering the phosphorylation of proximal signaling molecules and cell activation. This Macaca mulatta (Rhesus macaque) protein is NKG2-C type II integral membrane protein (KLRC2).